We begin with the raw amino-acid sequence, 429 residues long: Adenylosuccinate synthetase (429 aa).

GTP contacts are provided by residues 12–18 (GDEGKGK) and 40–42 (GHT). The active-site Proton acceptor is Asp13. Mg(2+) contacts are provided by Asp13 and Gly40. IMP is bound by residues 13 to 16 (DEGK), 38 to 41 (NAGH), Thr129, Arg143, Gln224, Thr239, and Arg303. The Proton donor role is filled by His41. 299–305 (ATTGRKR) lines the substrate pocket. GTP-binding positions include Arg305, 331–333 (KLD), and 413–415 (SVG).

It belongs to the adenylosuccinate synthetase family. Homodimer. It depends on Mg(2+) as a cofactor.

Its subcellular location is the cytoplasm. The catalysed reaction is IMP + L-aspartate + GTP = N(6)-(1,2-dicarboxyethyl)-AMP + GDP + phosphate + 2 H(+). Its pathway is purine metabolism; AMP biosynthesis via de novo pathway; AMP from IMP: step 1/2. Functionally, plays an important role in the de novo pathway of purine nucleotide biosynthesis. Catalyzes the first committed step in the biosynthesis of AMP from IMP. The protein is Adenylosuccinate synthetase of Desulfosudis oleivorans (strain DSM 6200 / JCM 39069 / Hxd3) (Desulfococcus oleovorans).